The primary structure comprises 107 residues: Nucleoid-associated protein Xfasm12_1216 (107 aa).

It belongs to the YbaB/EbfC family. As to quaternary structure, homodimer.

It is found in the cytoplasm. Its subcellular location is the nucleoid. Binds to DNA and alters its conformation. May be involved in regulation of gene expression, nucleoid organization and DNA protection. This Xylella fastidiosa (strain M12) protein is Nucleoid-associated protein Xfasm12_1216.